A 195-amino-acid chain; its full sequence is Probable GTP-binding protein EngB (195 aa).

In terms of domain architecture, EngB-type G spans 24–195; the sequence is ELPEIALAGR…EAWDAILEKL (172 aa). Residues 32–39, 59–63, 77–80, 144–147, and 176–178 contribute to the GTP site; these read GRSNVGKS, GKTQL, DVPG, TKAD, and FSS. The Mg(2+) site is built by Ser39 and Thr61.

This sequence belongs to the TRAFAC class TrmE-Era-EngA-EngB-Septin-like GTPase superfamily. EngB GTPase family. Requires Mg(2+) as cofactor.

Its function is as follows. Necessary for normal cell division and for the maintenance of normal septation. This Streptococcus pneumoniae (strain Hungary19A-6) protein is Probable GTP-binding protein EngB.